The following is a 61-amino-acid chain: uncharacterized protein (61 aa).

Residues 34–61 (TDVEDIDRLISMLDDLEAKYERFKKDWE) adopt a coiled-coil conformation.

This is an uncharacterized protein from Bacillus subtilis (strain 168).